Reading from the N-terminus, the 388-residue chain is GDP-4-keto-6-deoxy-D-mannose 3-dehydratase (388 aa).

Position 26-29 (26-29) interacts with GDP-4-dehydro-alpha-D-rhamnose; that stretch reads KMFT. The chain crosses the membrane as a helical span at residues 49 to 69; sequence YAVMVSSGSTANLLMIAALFF. Pyridoxal 5'-phosphate is bound by residues 56-57, Trp-88, Glu-162, and Ser-183; that span reads GS. Catalysis depends on His-188, which acts as the Proton donor/acceptor. His-215 contacts L-glutamate. Arg-219 serves as a coordination point for GDP-4-dehydro-alpha-D-rhamnose. Asn-248 contributes to the pyridoxal 5'-phosphate binding site. Arg-250 lines the L-glutamate pocket. Glu-329 contributes to the GDP-4-dehydro-alpha-D-rhamnose binding site.

This sequence belongs to the DegT/DnrJ/EryC1 family. In terms of assembly, homodimer. It depends on pyridoxal 5'-phosphate as a cofactor.

Its subcellular location is the cell membrane. The catalysed reaction is GDP-4-dehydro-alpha-D-rhamnose + L-glutamate = GDP-4-dehydro-3,6-dideoxy-alpha-D-mannose + 2-oxoglutarate + NH4(+). The protein operates within nucleotide-sugar metabolism; GDP-L-colitose biosynthesis. Involved in the biosynthesis of L-colitose, a 3,6-dideoxyhexose present in the O-antigen region of lipopolysaccharides (LPS), where it serves as an antigenic determinant and is vital for bacterial defense and survival. Catalyzes the removal of the C3'-hydroxyl group from GDP-4-keto-6-deoxy-D-mannose via a combined transamination-deoxygenation reaction. The catalysis is initiated by a transamination step in which pyridoxal 5'-phosphate (PLP) is converted to pyridoxamine 5'-phosphate (PMP) in the presence of L-glutamate. This coenzyme then forms a Schiff base with GDP-4-keto-6-deoxy-D-mannose and the resulting adduct undergoes a PMP-mediated beta-dehydration reaction to give a sugar enamine intermediate, which after tautomerization and hydrolysis to release ammonia yields GDP-4-keto-3,6-dideoxy-D-mannose as a product. In vitro, is able to catalyze the formation of GDP-4-keto-3,6-dideoxymannose using GDP-perosamine rather than GDP-4-keto-6-deoxymannose as a substrate, with no need of glutamate. This Escherichia coli O55:H7 (strain CB9615 / EPEC) protein is GDP-4-keto-6-deoxy-D-mannose 3-dehydratase.